A 635-amino-acid polypeptide reads, in one-letter code: Chaperone protein DnaK (635 aa).

The residue at position 200 (Thr-200) is a Phosphothreonine; by autocatalysis. Residues Lys-595–Lys-635 form a disordered region. Residues Thr-612–Asp-621 are compositionally biased toward basic and acidic residues. The span at Asp-622 to Lys-635 shows a compositional bias: acidic residues.

It belongs to the heat shock protein 70 family.

Acts as a chaperone. The chain is Chaperone protein DnaK from Ruthia magnifica subsp. Calyptogena magnifica.